We begin with the raw amino-acid sequence, 179 residues long: ATP synthase subunit b, chloroplastic (179 aa).

The chain crosses the membrane as a helical span at residues 35–51 (IVILGGGIFKLGSTALS).

It belongs to the ATPase B chain family. In terms of assembly, F-type ATPases have 2 components, F(1) - the catalytic core - and F(0) - the membrane proton channel. F(1) has five subunits: alpha(3), beta(3), gamma(1), delta(1), epsilon(1). F(0) has four main subunits: a(1), b(1), b'(1) and c(10-14). The alpha and beta chains form an alternating ring which encloses part of the gamma chain. F(1) is attached to F(0) by a central stalk formed by the gamma and epsilon chains, while a peripheral stalk is formed by the delta, b and b' chains.

It localises to the plastid. The protein localises to the chloroplast thylakoid membrane. F(1)F(0) ATP synthase produces ATP from ADP in the presence of a proton or sodium gradient. F-type ATPases consist of two structural domains, F(1) containing the extramembraneous catalytic core and F(0) containing the membrane proton channel, linked together by a central stalk and a peripheral stalk. During catalysis, ATP synthesis in the catalytic domain of F(1) is coupled via a rotary mechanism of the central stalk subunits to proton translocation. Its function is as follows. Component of the F(0) channel, it forms part of the peripheral stalk, linking F(1) to F(0). In Emiliania huxleyi (Coccolithophore), this protein is ATP synthase subunit b, chloroplastic.